A 337-amino-acid polypeptide reads, in one-letter code: Histidine N-acetyltransferase (337 aa).

Positions 1 to 2 (MK) are cleaved as a propeptide — removed in mature form. Residues 21–157 (LQFSVATEED…GILLMRFRAE (137 aa)) form the N-acetyltransferase domain.

As to expression, expressed exclusively in the brain and lens.

The catalysed reaction is L-histidine + acetyl-CoA = N(alpha)-acetyl-L-histidine + CoA + H(+). Its function is as follows. Enzyme responsible for the N-acetyl-histidine (NAH) synthesis, which is a major constituent of brain and lens of ectothermic vertebrates. This Oreochromis niloticus (Nile tilapia) protein is Histidine N-acetyltransferase (hisat).